We begin with the raw amino-acid sequence, 126 residues long: KRQQPGLWGRSADPQQAGLWGKRQQPGLWGRSADPQQAGLWGKRQNPGLWGRSADPQQAGLWGKRQHPGLWGRSADPQQAGLWGRSAGSGKRQERIGIWGRSAEPPQYKELEDLKQKSAIPKAKPQ.

A propeptide spans Lys1–Arg2 (1). Residues Lys1 to Gln126 form a disordered region. Trp8 carries the tryptophan amide modification. Residues Ser11–Gln15 constitute a propeptide, 2. A tryptophan amide mark is found at Trp20 and Trp29. The propeptide at Ser32–Gln36 is 2. A tryptophan amide mark is found at Trp41 and Trp50. Residues Ser53–Gln57 constitute a propeptide, 2. Trp62 and Trp71 each carry tryptophan amide. A propeptide spans Ser74–Gln78 (2). Tryptophan amide is present on Trp83. Positions Ser86–Gln93 are cleaved as a propeptide — 3. A Tryptophan amide modification is found at Trp99. Positions Ser102–Gln126 are cleaved as a propeptide — 4. Over residues Gln107–Gln116 the composition is skewed to basic and acidic residues.

It belongs to the LWamide neuropeptide family.

Its subcellular location is the secreted. Functionally, metamorphosin A may be part of an internal signaling system involved in control of metamorphosis. This chain is LWamide neuropeptides, found in Anemonia sulcata (Mediterranean snakelocks sea anemone).